The primary structure comprises 327 residues: MSHTLRVIFAGTPEFAAAALAAIHEAGFPVPLVLTQPDRPAGRGMKLQASPVKRYAQEHGIEVAQPPSLRRNGKYPAQATAAIEQLRATPHDVMVVAAYGLLLPQEVLDIAPHGCINIHASLLPRWRGAAPIHRAIEAGDAETGITLMQMDAGLDTGAMISEVRTAIAGTDTTATLHDRLAEAGAKLIVDALVELERSGKLASIPQPAAGATYAEKIAKHEAALDWRRPAAELARQVRAFDPFPGGAATLDGAVLKLWSAAAVDASCKAEPGTIVEVSPEGVVVACGDGALRITQLQKPGGKRLPVRDFLAGSTLAAGQRFELAQPQ.

A (6S)-5,6,7,8-tetrahydrofolate-binding site is contributed by 121-124 (SLLP).

This sequence belongs to the Fmt family.

It carries out the reaction L-methionyl-tRNA(fMet) + (6R)-10-formyltetrahydrofolate = N-formyl-L-methionyl-tRNA(fMet) + (6S)-5,6,7,8-tetrahydrofolate + H(+). Attaches a formyl group to the free amino group of methionyl-tRNA(fMet). The formyl group appears to play a dual role in the initiator identity of N-formylmethionyl-tRNA by promoting its recognition by IF2 and preventing the misappropriation of this tRNA by the elongation apparatus. This is Methionyl-tRNA formyltransferase from Paraburkholderia phymatum (strain DSM 17167 / CIP 108236 / LMG 21445 / STM815) (Burkholderia phymatum).